The chain runs to 1020 residues: Calcium-transporting ATPase sarcoplasmic/endoplasmic reticulum type (1020 aa).

At Met1–Ser48 the chain is on the cytoplasmic side. Residues Ile49 to Ala69 traverse the membrane as a helical segment. The Lumenal portion of the chain corresponds to Ile70–Val89. Residues Glu90–Arg110 traverse the membrane as a helical segment. The Cytoplasmic portion of the chain corresponds to Asn111–Leu253. Residue Ser240 is modified to Phosphoserine. A helical transmembrane segment spans residues Asp254–Ala273. Residues Ile274–Tyr295 lie on the Lumenal side of the membrane. A helical transmembrane segment spans residues Phe296–Ala313. Residues Val304, Ala305, Ile307, and Glu309 each contribute to the Ca(2+) site. Residues Val314–Met757 are Cytoplasmic-facing. Asp351 (4-aspartylphosphate intermediate) is an active-site residue. Residues Asp703 and Asp707 each contribute to the Mg(2+) site. Residues Lys758–Leu777 traverse the membrane as a helical segment. Ca(2+) is bound by residues Asn768 and Glu771. Topologically, residues Thr778–Leu787 are lumenal. A helical transmembrane segment spans residues Ile788–Gly808. Ca(2+) is bound by residues Asn796, Thr799, and Asp800. The Cytoplasmic segment spans residues Phe809 to Leu828. A helical membrane pass occupies residues Ile829–Ala851. Residues Ala852 to Met897 lie on the Lumenal side of the membrane. The helical transmembrane segment at Thr898–Ser917 threads the bilayer. A Ca(2+)-binding site is contributed by Glu908. Over Glu918–Asn930 the chain is Cytoplasmic. Residues Leu931–Tyr949 form a helical membrane-spanning segment. Topologically, residues Val950–Ala964 are lumenal. A helical transmembrane segment spans residues Glu965–Lys985. Residues Phe986–Leu1020 lie on the Cytoplasmic side of the membrane.

Belongs to the cation transport ATPase (P-type) (TC 3.A.3) family. Interacts with SclA and SclB.

It is found in the endoplasmic reticulum membrane. Its subcellular location is the sarcoplasmic reticulum membrane. It carries out the reaction Ca(2+)(in) + ATP + H2O = Ca(2+)(out) + ADP + phosphate + H(+). Its function is as follows. This magnesium-dependent enzyme catalyzes the hydrolysis of ATP coupled with the transport of calcium. The polypeptide is Calcium-transporting ATPase sarcoplasmic/endoplasmic reticulum type (Drosophila melanogaster (Fruit fly)).